The sequence spans 172 residues: Endoribonuclease YbeY (172 aa).

Zn(2+) contacts are provided by H124, H128, and H134.

The protein belongs to the endoribonuclease YbeY family. The cofactor is Zn(2+).

It localises to the cytoplasm. In terms of biological role, single strand-specific metallo-endoribonuclease involved in late-stage 70S ribosome quality control and in maturation of the 3' terminus of the 16S rRNA. The protein is Endoribonuclease YbeY of Rhodopseudomonas palustris (strain BisA53).